The following is a 277-amino-acid chain: Probable cytochrome c oxidase subunit 3 (277 aa).

6 helical membrane passes run 20–40 (PWPI…VSFM), 45–65 (FNHY…YSWW), 88–108 (IGMA…FASF), 173–193 (CVTA…MQAY), 211–231 (FYLA…FLIV), and 255–275 (AWYW…VYIF).

It belongs to the cytochrome c oxidase subunit 3 family.

Its subcellular location is the cell membrane. It catalyses the reaction 4 Fe(II)-[cytochrome c] + O2 + 8 H(+)(in) = 4 Fe(III)-[cytochrome c] + 2 H2O + 4 H(+)(out). This is Probable cytochrome c oxidase subunit 3 (ctaE) from Rickettsia bellii (strain RML369-C).